Reading from the N-terminus, the 275-residue chain is Large ribosomal subunit protein uL2 (275 aa).

Disordered stretches follow at residues 24-48 (LTTDRPHKPLTKTKQRTGGRRNAGD) and 224-264 (VMNP…NKRT). A compositionally biased stretch (basic residues) spans 31-42 (KPLTKTKQRTGG).

Belongs to the universal ribosomal protein uL2 family. In terms of assembly, part of the 50S ribosomal subunit. Forms a bridge to the 30S subunit in the 70S ribosome.

One of the primary rRNA binding proteins. Required for association of the 30S and 50S subunits to form the 70S ribosome, for tRNA binding and peptide bond formation. It has been suggested to have peptidyltransferase activity; this is somewhat controversial. Makes several contacts with the 16S rRNA in the 70S ribosome. This chain is Large ribosomal subunit protein uL2, found in Koribacter versatilis (strain Ellin345).